The primary structure comprises 1382 residues: Hepatocyte growth factor receptor (1382 aa).

An N-terminal signal peptide occupies residues 1-24; it reads MKASAVLAPGILVILFTLVQKSNC. Residues 25–933 are Extracellular-facing; it reads ECKEALVKSK…VIVQPDQNIT (909 aa). A Sema domain is found at 27–516; that stretch reads KEALVKSKMN…TGKKITKIPL (490 aa). A glycan (N-linked (GlcNAc...) asparagine) is linked at Asn-45. Cystine bridges form between Cys-95–Cys-101, Cys-98–Cys-160, Cys-133–Cys-141, and Cys-173–Cys-176. Asn-106 is a glycosylation site (N-linked (GlcNAc...) asparagine). Asn-203 and Asn-359 each carry an N-linked (GlcNAc...) asparagine glycan. 2 disulfides stabilise this stretch: Cys-299/Cys-364 and Cys-386/Cys-398. N-linked (GlcNAc...) asparagine glycosylation is found at Asn-400 and Asn-406. Cystine bridges form between Cys-521-Cys-539, Cys-527-Cys-562, Cys-530-Cys-546, and Cys-542-Cys-552. IPT/TIG domains lie at 564 to 656, 658 to 740, and 743 to 837; these read PTIY…FSYV, PIIT…FSYQ, and PIIY…LIYV. O-linked (Man) threonine glycosylation is present at Thr-583. Asn-608 and Asn-636 each carry an N-linked (GlcNAc...) asparagine glycan. O-linked (Man) threonine glycans are attached at residues Thr-677 and Thr-762. 3 N-linked (GlcNAc...) asparagine glycosylation sites follow: Asn-786, Asn-880, and Asn-931. A helical transmembrane segment spans residues 934 to 956; it reads EFIVGILSISGILLTLLGLLLWW. Over 957–1382 the chain is Cytoplasmic; the sequence is KKKKQIKDLG…QDNFDSEGNT (426 aa). Ser-967 is modified (phosphoserine). Phosphothreonine is present on Thr-978. Phosphoserine occurs at positions 991, 998, and 1001. The residue at position 1004 (Tyr-1004) is a Phosphotyrosine. Positions 1079–1346 constitute a Protein kinase domain; that stretch reads VHFNEVIGRG…RISAIFSTFI (268 aa). ATP is bound by residues 1085–1093 and Lys-1111; that span reads IGRGHFGCV. Asp-1205 (proton acceptor) is an active-site residue. The segment at 1213–1382 is interaction with RANBP9; that stretch reads LDENFTVKVA…QDNFDSEGNT (170 aa). At Tyr-1231 the chain carries Phosphotyrosine. Tyr-1235 and Tyr-1236 each carry phosphotyrosine; by autocatalysis. A Phosphothreonine modification is found at Thr-1290. The interaction with MUC20 stretch occupies residues 1321-1360; the sequence is WHPKAELRPSFSELVSRISAIFSTFIGEHYVHVNATYVNI. 2 positions are modified to phosphotyrosine; by autocatalysis: Tyr-1350 and Tyr-1357. A Phosphotyrosine modification is found at Tyr-1366.

Belongs to the protein kinase superfamily. Tyr protein kinase family. In terms of assembly, heterodimer made of an alpha chain (50 kDa) and a beta chain (145 kDa) which are disulfide linked. Binds PLXNB1. Interacts when phosphorylated with downstream effectors including STAT3, PIK3R1, SRC, PCLG1, GRB2 and GAB1. Interacts with SPSB1, SPSB2 and SPSB4. Interacts with INPP5D/SHIP1. When phosphorylated at Tyr-1357, interacts with INPPL1/SHIP2. Interacts with RANBP9 and RANBP10, as well as SPSB1, SPSB2, SPSB3 and SPSB4. SPSB1 binding occurs in the presence and in the absence of HGF, however HGF treatment has a positive effect on this interaction. Interacts with MUC20; prevents interaction with GRB2 and suppresses hepatocyte growth factor-induced cell proliferation. Interacts with GRB10. Interacts with PTPN1 and PTPN2. Interacts with tensin TNS3. Interacts (when phosphorylated) with tensin TNS4 (via SH2 domain); the interaction increases MET protein stability by inhibiting MET endocytosis and subsequent lysosomal degradation. In terms of processing, autophosphorylated in response to ligand binding on Tyr-1235 and Tyr-1236 in the kinase domain leading to further phosphorylation of Tyr-1350 and Tyr-1357 in the C-terminal multifunctional docking site. Dephosphorylated by PTPRJ at Tyr-1350 and Tyr-1366. Dephosphorylated by PTPN1 and PTPN2. Post-translationally, ubiquitinated. Ubiquitination by CBL regulates the receptor stability and activity through proteasomal degradation. O-mannosylation of IPT/TIG domains by TMEM260 is required for protein maturation. O-mannosylated residues are composed of single mannose glycans that are not elongated or modified.

It localises to the membrane. It carries out the reaction L-tyrosyl-[protein] + ATP = O-phospho-L-tyrosyl-[protein] + ADP + H(+). With respect to regulation, in its inactive state, the C-terminal tail interacts with the catalytic domain and inhibits the kinase activity. Upon ligand binding, the C-terminal tail is displaced and becomes phosphorylated, thus increasing the kinase activity. Functionally, receptor tyrosine kinase that transduces signals from the extracellular matrix into the cytoplasm by binding to hepatocyte growth factor/HGF ligand. Regulates many physiological processes including proliferation, scattering, morphogenesis and survival. Ligand binding at the cell surface induces autophosphorylation of MET on its intracellular domain that provides docking sites for downstream signaling molecules. Following activation by ligand, interacts with the PI3-kinase subunit PIK3R1, PLCG1, SRC, GRB2, STAT3 or the adapter GAB1. Recruitment of these downstream effectors by MET leads to the activation of several signaling cascades including the RAS-ERK, PI3 kinase-AKT, or PLCgamma-PKC. The RAS-ERK activation is associated with the morphogenetic effects while PI3K/AKT coordinates prosurvival effects. During embryonic development, MET signaling plays a role in gastrulation, development and migration of muscles and neuronal precursors, angiogenesis and kidney formation. In adults, participates in wound healing as well as organ regeneration and tissue remodeling. Also promotes differentiation and proliferation of hematopoietic cells. The sequence is that of Hepatocyte growth factor receptor (MET) from Atelerix albiventris (Middle-African hedgehog).